Here is a 241-residue protein sequence, read N- to C-terminus: Ribosomal RNA small subunit methyltransferase G (241 aa).

Residues G79, F84, 130 to 131 (AE), and R150 each bind S-adenosyl-L-methionine.

It belongs to the methyltransferase superfamily. RNA methyltransferase RsmG family.

Its subcellular location is the cytoplasm. Its function is as follows. Specifically methylates the N7 position of a guanine in 16S rRNA. This chain is Ribosomal RNA small subunit methyltransferase G, found in Ligilactobacillus salivarius (strain UCC118) (Lactobacillus salivarius).